The primary structure comprises 416 residues: D-amino acid dehydrogenase (416 aa).

3–17 (VIVLGAGIIGVTSAY) provides a ligand contact to FAD.

It belongs to the DadA oxidoreductase family. FAD serves as cofactor.

It catalyses the reaction a D-alpha-amino acid + A + H2O = a 2-oxocarboxylate + AH2 + NH4(+). Its pathway is amino-acid degradation; D-alanine degradation; NH(3) and pyruvate from D-alanine: step 1/1. In terms of biological role, oxidative deamination of D-amino acids. This is D-amino acid dehydrogenase from Sinorhizobium medicae (strain WSM419) (Ensifer medicae).